Consider the following 80-residue polypeptide: U-Asilidin(1)-Dg12 (80 aa).

The signal sequence occupies residues 1–24 (MARLLVVSVGVFLAVIMLSSETMS). A propeptide spanning residues 25–46 (LPAGENLPALTLFEAQNQLIGL) is cleaved from the precursor. Cystine bridges form between C53–C67, C60–C71, and C66–C78.

This sequence belongs to the asilidin-1 family. In terms of tissue distribution, expressed by the venom gland.

Its subcellular location is the secreted. Functionally, neurotoxin that may modulate ions channels (other than those tested). In vivo, induces neurotoxic effects when injected into insects (tested on L.cuprina and A.domesticus). This chain is U-Asilidin(1)-Dg12, found in Dolopus genitalis (Giant Australian assassin fly).